The primary structure comprises 326 residues: Tryptophan--tRNA ligase (326 aa).

ATP-binding positions include 11 to 13 (QPT) and 19 to 20 (GN). Residues 12–20 (PTGQIHLGN) carry the 'HIGH' region motif. Aspartate 135 contacts L-tryptophan. Residues 147–149 (GED), valine 186, and 195–199 (KMSKS) contribute to the ATP site. Positions 195-199 (KMSKS) match the 'KMSKS' region motif.

The protein belongs to the class-I aminoacyl-tRNA synthetase family. As to quaternary structure, homodimer.

It is found in the cytoplasm. It carries out the reaction tRNA(Trp) + L-tryptophan + ATP = L-tryptophyl-tRNA(Trp) + AMP + diphosphate + H(+). Catalyzes the attachment of tryptophan to tRNA(Trp). The protein is Tryptophan--tRNA ligase of Helicobacter pylori (strain ATCC 700392 / 26695) (Campylobacter pylori).